The chain runs to 223 residues: Large ribosomal subunit protein uL4c (223 aa).

The segment at 61 to 96 is disordered; sequence TKTRSEVEGGGKKPWKQKGTGNARAGSSNSPLWKGG.

The protein belongs to the universal ribosomal protein uL4 family. In terms of assembly, part of the 50S ribosomal subunit.

It is found in the plastid. The protein resides in the chloroplast. In terms of biological role, probably binds the 23S rRNA. The chain is Large ribosomal subunit protein uL4c (rpl4) from Guillardia theta (Cryptophyte).